The following is a 315-amino-acid chain: Aspartate carbamoyltransferase catalytic subunit (315 aa).

Carbamoyl phosphate is bound by residues Arg-55 and Thr-56. Position 83 (Lys-83) interacts with L-aspartate. Carbamoyl phosphate-binding residues include Arg-105, His-138, and Gln-141. L-aspartate is bound by residues Arg-171 and Arg-225. Carbamoyl phosphate-binding residues include Gly-266 and Pro-267.

The protein belongs to the aspartate/ornithine carbamoyltransferase superfamily. ATCase family. As to quaternary structure, heterododecamer (2C3:3R2) of six catalytic PyrB chains organized as two trimers (C3), and six regulatory PyrI chains organized as three dimers (R2).

It catalyses the reaction carbamoyl phosphate + L-aspartate = N-carbamoyl-L-aspartate + phosphate + H(+). It functions in the pathway pyrimidine metabolism; UMP biosynthesis via de novo pathway; (S)-dihydroorotate from bicarbonate: step 2/3. Functionally, catalyzes the condensation of carbamoyl phosphate and aspartate to form carbamoyl aspartate and inorganic phosphate, the committed step in the de novo pyrimidine nucleotide biosynthesis pathway. This chain is Aspartate carbamoyltransferase catalytic subunit, found in Mycolicibacterium gilvum (strain PYR-GCK) (Mycobacterium gilvum (strain PYR-GCK)).